A 370-amino-acid polypeptide reads, in one-letter code: MEATKQVVNFGPGPAKLPHSVLLEIQKQLLDYRGLGISVLEMSHRSSDFAKIIGNTENLVRELLAVPNNYKVIFVQGGGSGQFSAVPLNLIGLKAGRSADYVVTGAWSAKAAEEAKKFGTVNIVHPKLGSYTKIPDPSTWNLNPDASYVYFCANETVHGVEFDFVPDVKGAVLVCDMSSNFLSRPVDVSKFGVIFAGAQKNVGSAGVTVVIVRDDLLGFSLRECPSVLDYKVQAGNNSLYNTPPCFSIYVMGMVLEWIKNNGGAAAMEKLSSIKSQMIYEIIDNSQGFYVCPVERQNRSRMNIPFRIGNAKGDEALEKRFLDKAVELNMISLKGHRSVGGIRASLYNAVTTEDVEKLAAFMKNFLEMHQL.

Position 1 is an N-acetylmethionine (Met-1). The O-phospho-L-serine site is built by His-44 and Arg-45. At Lys-51 the chain carries N6-acetyllysine. Pyridoxal 5'-phosphate contacts are provided by Gly-79 and Trp-107. Position 127 is an N6-acetyllysine (Lys-127). Pyridoxal 5'-phosphate-binding residues include Thr-156, Asp-176, and Gln-199. An N6-(pyridoxal phosphate)lysine modification is found at Lys-200. Positions 241 and 242 each coordinate pyridoxal 5'-phosphate. Lys-269, Lys-318, and Lys-323 each carry N6-acetyllysine. Position 331 is a phosphoserine (Ser-331). An N6-acetyllysine modification is found at Lys-333. O-phospho-L-serine is bound by residues His-335, Arg-336, and Arg-342.

It belongs to the class-V pyridoxal-phosphate-dependent aminotransferase family. SerC subfamily. In terms of assembly, homodimer. Pyridoxal 5'-phosphate serves as cofactor.

The enzyme catalyses O-phospho-L-serine + 2-oxoglutarate = 3-phosphooxypyruvate + L-glutamate. It participates in amino-acid biosynthesis; L-serine biosynthesis; L-serine from 3-phospho-D-glycerate: step 2/3. Its function is as follows. Involved in L-serine biosynthesis via the phosphorylated pathway, a three-step pathway converting the glycolytic intermediate 3-phospho-D-glycerate into L-serine. Catalyzes the second step, that is the pyridoxal 5'-phosphate-dependent transamination of 3-phosphohydroxypyruvate and L-glutamate to O-phosphoserine (OPS) and alpha-ketoglutarate. The chain is Phosphoserine aminotransferase from Mus musculus (Mouse).